Consider the following 759-residue polypeptide: Probable Na(+)/H(+) antiporter C3A11.09 (759 aa).

Helical transmembrane passes span His12–Ile32, Leu36–Ala56, Met105–Ile125, Ser133–Gly153, Glu172–Ile192, Ile206–Ala226, Phe244–Val264, Val295–Pro315, Met319–Ala339, Ala361–Ala381, and Val415–Met435. Thr442 is modified (phosphothreonine). Ser446 bears the Phosphoserine mark. Thr448 is subject to Phosphothreonine. Basic and acidic residues-rich tracts occupy residues Leu514–Ala529, Tyr537–Glu547, Ile590–Ala601, Asn622–Arg647, and Ser655–Gln671. Disordered stretches follow at residues Leu514–Asp558, Ser578–Arg606, and Asn622–Glu759. The segment covering Asn696–Asn713 has biased composition (polar residues). Asn699 and Asn713 each carry an N-linked (GlcNAc...) asparagine glycan. Residues Arg724 to Glu733 are compositionally biased toward low complexity. Ser735 is subject to Phosphoserine.

It belongs to the fungal Na(+)/H(+) exchanger family.

Its subcellular location is the membrane. In terms of biological role, sodium export from cell, takes up external protons in exchange for internal sodium ions. The sequence is that of Probable Na(+)/H(+) antiporter C3A11.09 (sod22) from Schizosaccharomyces pombe (strain 972 / ATCC 24843) (Fission yeast).